A 491-amino-acid polypeptide reads, in one-letter code: Glutathione synthetase GSH2 (491 aa).

Substrate is bound at residue Arg-128. Glu-146 serves as a coordination point for ATP. Residues Glu-146 and Asn-148 each coordinate Mg(2+). Substrate contacts are provided by residues 150–153 (VSVS), 228–230 (ERN), Gln-234, and 285–288 (RTGY). ATP contacts are provided by residues Lys-324, 382 to 391 (KPQREGGGNN), Tyr-393, 415 to 418 (MELI), and Glu-442. Residue Glu-386 coordinates Mg(2+). Arg-467 provides a ligand contact to substrate. Residues Lys-469 and Glu-475 each contribute to the ATP site. 478-479 (VA) provides a ligand contact to substrate.

Belongs to the eukaryotic GSH synthase family. In terms of assembly, homodimer. It depends on Mg(2+) as a cofactor.

The catalysed reaction is gamma-L-glutamyl-L-cysteine + glycine + ATP = glutathione + ADP + phosphate + H(+). The protein operates within sulfur metabolism; glutathione biosynthesis; glutathione from L-cysteine and L-glutamate: step 2/2. In Saccharomyces cerevisiae (strain ATCC 204508 / S288c) (Baker's yeast), this protein is Glutathione synthetase GSH2 (GSH2).